We begin with the raw amino-acid sequence, 107 residues long: Nucleoid-associated protein A1G_07310 (107 aa).

It belongs to the YbaB/EbfC family. As to quaternary structure, homodimer.

It is found in the cytoplasm. The protein localises to the nucleoid. Binds to DNA and alters its conformation. May be involved in regulation of gene expression, nucleoid organization and DNA protection. This is Nucleoid-associated protein A1G_07310 from Rickettsia rickettsii (strain Sheila Smith).